A 569-amino-acid polypeptide reads, in one-letter code: 5'-AMP-activated protein kinase subunit gamma-2 (569 aa).

Residues 1 to 222 (MGSAVMDTKK…TRPPLASPTH (222 aa)) form a disordered region. 8 positions are modified to phosphoserine: Ser65, Ser71, Ser73, Ser90, Ser138, Ser143, Ser161, and Ser162. Residues 156 to 167 (TSGLSSSPSTPT) show a composition bias toward low complexity. The residue at position 165 (Thr165) is a Phosphothreonine. The segment covering 179-189 (SYKHEPERLEN) has biased composition (basic and acidic residues). The span at 192 to 212 (YASSSPPDTGQRFCPSSFQSP) shows a compositional bias: polar residues. Ser196 carries the phosphoserine modification. CBS domains lie at 275–335 (PTSS…KSPM), 357–415 (TFKP…MSDM), and 430–492 (IGTY…NLDI). ADP contacts are provided by residues Arg302, 317 to 322 (MLTITD), Val362, 383 to 384 (HR), and Lys402. AMP-binding positions include Arg302, 317 to 322 (MLTITD), Val362, His383, 383 to 384 (HR), Lys402, Thr432, Ala437, 458 to 459 (SA), 474 to 477 (SKFD), Arg501, His530, 530 to 531 (HR), and 546 to 549 (SLSD). ATP-binding positions include Arg302, 317 to 322 (MLTITD), Val362, 383 to 384 (HR), Arg384, and Lys402. The short motif at 370–391 (LFDAVYSLIKNKIHRLPVIDPI) is the AMPK pseudosubstrate element. ADP contacts are provided by residues 474–477 (SKFD), Arg501, and 530–531 (HR). ATP contacts are provided by residues 474-477 (SKFD), Arg501, and 530-531 (HR). One can recognise a CBS 4 domain in the interval 504–562 (YFEGVVKCNKLEILETIVDRIVRAEVHRLVVVNEADSIVGIISLSDILQALILTPAGAK).

This sequence belongs to the 5'-AMP-activated protein kinase gamma subunit family. AMPK is a heterotrimer of an alpha catalytic subunit (PRKAA1 or PRKAA2), a beta (PRKAB1 or PRKAB2) and a gamma non-catalytic subunits (PRKAG1, PRKAG2 or PRKAG3). Interacts with FNIP1 and FNIP2. Phosphorylated by ULK1; leading to negatively regulate AMPK activity and suggesting the existence of a regulatory feedback loop between ULK1 and AMPK. Post-translationally, glycosylated; O-GlcNAcylated by OGT, promoting the AMP-activated protein kinase (AMPK) activity. Isoform B is ubiquitously expressed except in liver and thymus. The highest level is detected in heart with abundant expression in placenta and testis.

Functionally, AMP/ATP-binding subunit of AMP-activated protein kinase (AMPK), an energy sensor protein kinase that plays a key role in regulating cellular energy metabolism. In response to reduction of intracellular ATP levels, AMPK activates energy-producing pathways and inhibits energy-consuming processes: inhibits protein, carbohydrate and lipid biosynthesis, as well as cell growth and proliferation. AMPK acts via direct phosphorylation of metabolic enzymes, and by longer-term effects via phosphorylation of transcription regulators. Also acts as a regulator of cellular polarity by remodeling the actin cytoskeleton; probably by indirectly activating myosin. Gamma non-catalytic subunit mediates binding to AMP, ADP and ATP, leading to activate or inhibit AMPK: AMP-binding results in allosteric activation of alpha catalytic subunit (PRKAA1 or PRKAA2) both by inducing phosphorylation and preventing dephosphorylation of catalytic subunits. ADP also stimulates phosphorylation, without stimulating already phosphorylated catalytic subunit. ATP promotes dephosphorylation of catalytic subunit, rendering the AMPK enzyme inactive. This Homo sapiens (Human) protein is 5'-AMP-activated protein kinase subunit gamma-2 (PRKAG2).